Reading from the N-terminus, the 119-residue chain is Holo-[acyl-carrier-protein] synthase (119 aa).

Mg(2+) is bound by residues aspartate 5 and glutamate 51.

Belongs to the P-Pant transferase superfamily. AcpS family. Mg(2+) serves as cofactor.

Its subcellular location is the cytoplasm. It catalyses the reaction apo-[ACP] + CoA = holo-[ACP] + adenosine 3',5'-bisphosphate + H(+). Functionally, transfers the 4'-phosphopantetheine moiety from coenzyme A to a Ser of acyl-carrier-protein. This chain is Holo-[acyl-carrier-protein] synthase, found in Helicobacter pylori (strain ATCC 700392 / 26695) (Campylobacter pylori).